The primary structure comprises 540 residues: Cytosolic carboxypeptidase 6 (540 aa).

The region spanning 167-438 (YPYTYTRFQH…NVARTFLDYY (272 aa)) is the Peptidase M14 domain. Positions 230, 233, and 328 each coordinate Zn(2+). Glu-401 acts as the Proton donor/acceptor in catalysis.

The protein belongs to the peptidase M14 family. As to quaternary structure, interacts with MYLK. Zn(2+) serves as cofactor. In terms of tissue distribution, widely expressed. Expressed abundantly in testis, pituitary and brain and to a lower extent in eye, stomach, adrenal and kidney. In brain, expressed at low level in cerebellum as compared to cortex.

It localises to the cytoplasm. The protein localises to the cytosol. It is found in the cytoskeleton. Its subcellular location is the microtubule organizing center. The protein resides in the centrosome. It localises to the centriole. The protein localises to the golgi apparatus. It is found in the cilium basal body. It catalyses the reaction (L-glutamyl)(n+1)-gamma-L-glutamyl-L-glutamyl-[protein] + H2O = (L-glutamyl)(n)-gamma-L-glutamyl-L-glutamyl-[protein] + L-glutamate. The enzyme catalyses C-terminal L-alpha-aminoacyl-L-glutamyl-L-glutamyl-[tubulin] + H2O = C-terminal L-alpha-aminoacyl-L-glutamyl-[tubulin] + L-glutamate. In terms of biological role, metallocarboxypeptidase that mediates protein deglutamylation of tubulin and non-tubulin target proteins. Catalyzes the removal of polyglutamate side chains present on the gamma-carboxyl group of glutamate residues within the C-terminal tail of tubulin protein. Specifically cleaves tubulin long-side-chains, while it is not able to remove the branching point glutamate. Also catalyzes the removal of polyglutamate residues from the carboxy-terminus of non-tubulin proteins such as MYLK. Mediates the deglutamylation of nucleotidyltransferase CGAS, leading to CGAS antiviral defense response activation. Involved in KLF4 deglutamylation which promotes KLF4 proteasome-mediated degradation, thereby negatively regulating cell pluripotency maintenance and embryogenesis. The polypeptide is Cytosolic carboxypeptidase 6 (Mus musculus (Mouse)).